The primary structure comprises 533 residues: Flavin-containing monooxygenase 5 (533 aa).

Arg5 carries the post-translational modification Dimethylated arginine. FAD-binding positions include 10–14 (GGGVS), Glu33, and 41–42 (LW). A Phosphoserine modification is found at Ser54. At Tyr56 the chain carries Phosphotyrosine. Ser58 carries the phosphoserine modification. Residue 62–63 (NT) participates in FAD binding. 196–199 (SGGD) serves as a coordination point for NADP(+). Ser280 bears the Phosphoserine mark. Thr284 carries the phosphothreonine modification. Ser401 carries the phosphoserine modification. A helical transmembrane segment spans residues 510-530 (MVSAVTTGCFMLAVVFFAIIM).

Belongs to the FMO family. FAD serves as cofactor. Expressed in liver.

It is found in the microsome membrane. The protein resides in the endoplasmic reticulum membrane. It carries out the reaction N,N-dimethylaniline + NADPH + O2 + H(+) = N,N-dimethylaniline N-oxide + NADP(+) + H2O. The enzyme catalyses NADPH + O2 + H(+) = H2O2 + NADP(+). The catalysed reaction is heptan-2-one + NADPH + O2 + H(+) = pentyl acetate + NADP(+) + H2O. It catalyses the reaction octan-3-one + NADPH + O2 + H(+) = pentyl propanoate + NADP(+) + H2O. It carries out the reaction octan-3-one + NADPH + O2 + H(+) = ethyl hexanoate + NADP(+) + H2O. The enzyme catalyses hexan-3-one + NADPH + O2 + H(+) = ethyl butanoate + NADP(+) + H2O. The catalysed reaction is hexan-3-one + NADPH + O2 + H(+) = propyl propanoate + NADP(+) + H2O. It catalyses the reaction heptan-4-one + NADPH + O2 + H(+) = propyl butanoate + NADP(+) + H2O. It carries out the reaction (2E)-geranial + NADPH + O2 + H(+) = (1E)-2,6-dimethylhepta-1,5-dien-1-yl formate + NADP(+) + H2O. The enzyme catalyses sulcatone + NADPH + O2 + H(+) = 4-methylpent-3-en-1-yl acetate + NADP(+) + H2O. Functionally, acts as a Baeyer-Villiger monooxygenase on a broad range of substrates. Catalyzes the insertion of an oxygen atom into a carbon-carbon bond adjacent to a carbonyl, which converts ketones to esters. Active on diverse carbonyl compounds, whereas soft nucleophiles are mostly non- or poorly reactive. In contrast with other forms of FMO it is non- or poorly active on 'classical' substrates such as drugs, pesticides, and dietary components containing soft nucleophilic heteroatoms. Able to oxidize drug molecules bearing a carbonyl group on an aliphatic chain, such as nabumetone and pentoxifylline. Also, in the absence of substrates, shows slow but yet significant NADPH oxidase activity. Acts as a positive modulator of cholesterol biosynthesis as well as glucose homeostasis, promoting metabolic aging via pleiotropic effects. The polypeptide is Flavin-containing monooxygenase 5 (FMO5) (Cavia porcellus (Guinea pig)).